The primary structure comprises 252 residues: 4-hydroxy-tetrahydrodipicolinate reductase (252 aa).

Residues 8-13 (GCCGKM), 84-86 (CST), and 108-111 (SANM) each bind NAD(+). H141 serves as the catalytic Proton donor/acceptor. H142 serves as a coordination point for (S)-2,3,4,5-tetrahydrodipicolinate. K145 functions as the Proton donor in the catalytic mechanism. 151-152 (GT) is a binding site for (S)-2,3,4,5-tetrahydrodipicolinate.

Belongs to the DapB family.

It is found in the cytoplasm. It catalyses the reaction (S)-2,3,4,5-tetrahydrodipicolinate + NAD(+) + H2O = (2S,4S)-4-hydroxy-2,3,4,5-tetrahydrodipicolinate + NADH + H(+). The catalysed reaction is (S)-2,3,4,5-tetrahydrodipicolinate + NADP(+) + H2O = (2S,4S)-4-hydroxy-2,3,4,5-tetrahydrodipicolinate + NADPH + H(+). It functions in the pathway amino-acid biosynthesis; L-lysine biosynthesis via DAP pathway; (S)-tetrahydrodipicolinate from L-aspartate: step 4/4. Catalyzes the conversion of 4-hydroxy-tetrahydrodipicolinate (HTPA) to tetrahydrodipicolinate. In Clostridium botulinum (strain Eklund 17B / Type B), this protein is 4-hydroxy-tetrahydrodipicolinate reductase.